The primary structure comprises 348 residues: Alcohol dehydrogenase 1 (348 aa).

Ser-2 bears the N-acetylserine mark. A Zn(2+)-binding site is contributed by Cys-44. The NAD(+) site is built by His-45, Thr-46, and His-49. Residues His-67, Glu-68, Cys-98, Cys-101, Cys-104, Cys-112, and Cys-154 each coordinate Zn(2+). Residues Gly-181, Gly-182, Leu-183, Asp-202, and Lys-207 each contribute to the NAD(+) site. Residue Ser-213 is modified to Phosphoserine. An NAD(+)-binding site is contributed by Phe-222. Thr-223 carries the phosphothreonine modification. Residues Lys-226 and Lys-234 each participate in a glycyl lysine isopeptide (Lys-Gly) (interchain with G-Cter in ubiquitin) cross-link. The NAD(+) site is built by Val-269 and Met-271. A Phosphoserine modification is found at Ser-279. A Glycyl lysine isopeptide (Lys-Gly) (interchain with G-Cter in ubiquitin) cross-link involves residue Lys-287. 2 residues coordinate NAD(+): Ser-294 and Val-296. Phosphoserine is present on Ser-316. A Glycyl lysine isopeptide (Lys-Gly) (interchain with G-Cter in ubiquitin) cross-link involves residue Lys-319. Arg-341 contacts NAD(+).

Belongs to the zinc-containing alcohol dehydrogenase family. Homotetramer. The cofactor is Zn(2+).

Its subcellular location is the cytoplasm. It carries out the reaction a primary alcohol + NAD(+) = an aldehyde + NADH + H(+). It catalyses the reaction a secondary alcohol + NAD(+) = a ketone + NADH + H(+). The enzyme catalyses ethanol + NAD(+) = acetaldehyde + NADH + H(+). The catalysed reaction is allyl alcohol + NADP(+) = acrolein + NADPH + H(+). It carries out the reaction 1-propanol + NAD(+) = propanal + NADH + H(+). It catalyses the reaction butan-1-ol + NAD(+) = butanal + NADH + H(+). The enzyme catalyses hexan-1-ol + NAD(+) = hexanal + NADH + H(+). The catalysed reaction is (R)-lactaldehyde + NAD(+) = methylglyoxal + NADH + H(+). It carries out the reaction octan-1-ol + NAD(+) = octanal + NADH + H(+). It catalyses the reaction butan-2-ol + NAD(+) = butan-2-one + NADH + H(+). The enzyme catalyses propan-2-ol + NAD(+) = acetone + NADH + H(+). The catalysed reaction is isobutanol + NAD(+) = 2-methylpropanal + NADH + H(+). In terms of biological role, preferentially fermentative isozyme that reduces acetaldehyde to ethanol during the fermentation of glucose. Major enzyme required for the conversion of acetaldehyde to ethanol. Plays a key role in the carbohydrate metabolism through the regeneration of NAD(+) from glycolytic NADH. In the reverse reaction, preferentially catalyzes the conversion of primary unbranched alcohols to their corresponding aldehydes. Also shows activity toward secondary alcohols. Most active with ethanol, and its activity decreases as the size of the alcohol is increased. The protein is Alcohol dehydrogenase 1 (ADH1) of Saccharomyces cerevisiae (strain ATCC 204508 / S288c) (Baker's yeast).